Here is a 346-residue protein sequence, read N- to C-terminus: Protein RecA (346 aa).

67-74 serves as a coordination point for ATP; the sequence is GPESSGKT.

It belongs to the RecA family.

The protein resides in the cytoplasm. In terms of biological role, can catalyze the hydrolysis of ATP in the presence of single-stranded DNA, the ATP-dependent uptake of single-stranded DNA by duplex DNA, and the ATP-dependent hybridization of homologous single-stranded DNAs. It interacts with LexA causing its activation and leading to its autocatalytic cleavage. This chain is Protein RecA, found in Mycobacteroides abscessus (strain ATCC 19977 / DSM 44196 / CCUG 20993 / CIP 104536 / JCM 13569 / NCTC 13031 / TMC 1543 / L948) (Mycobacterium abscessus).